A 255-amino-acid chain; its full sequence is Type III pantothenate kinase (255 aa).

6–13 (DIGNTTSE) is an ATP binding site. Residues Tyr100 and 107–110 (GIDR) each bind substrate. Asp109 functions as the Proton acceptor in the catalytic mechanism. Asp129 lines the K(+) pocket. An ATP-binding site is contributed by Thr132. Thr184 is a substrate binding site.

Belongs to the type III pantothenate kinase family. As to quaternary structure, homodimer. It depends on NH4(+) as a cofactor. K(+) serves as cofactor.

Its subcellular location is the cytoplasm. The enzyme catalyses (R)-pantothenate + ATP = (R)-4'-phosphopantothenate + ADP + H(+). It participates in cofactor biosynthesis; coenzyme A biosynthesis; CoA from (R)-pantothenate: step 1/5. In terms of biological role, catalyzes the phosphorylation of pantothenate (Pan), the first step in CoA biosynthesis. This Persephonella marina (strain DSM 14350 / EX-H1) protein is Type III pantothenate kinase.